The following is a 636-amino-acid chain: MTMSVETQKETLGFQTEVKQLLHLMIHSLYSNKEIFLRELISNASDAVDKLRFEALSKPELLEGGAELKIRVSFDKDAKTVTLEDNGIGMSREDAITHLGTIAKSGTADFMKNLSGDQKKDSHLIGQFGVGFYSAFIVADKVEVFSRRAGLDASEGVHWSSKGEGEFEIATVDKADRGTRIVLHLKDGEDEFADGWRLRNIVKKYSDHIALPIELPKEQAAAEGEETPAQEWEVVNRASALWTRPRTEIKDEEYQEFYKHIGHDYENPLSWSHNKVEGKLEYSSLLYVPARAPFDLYQREAPKGLKLYVQRVFVMDQAESFLPLYLRFIKGVVDSNDLSLNVSREILQKDPIIDSMKSALTKRVLDMLEKLAKNEPEQYKGFWKNFGQVMKEGPAEDFANKEKIAGLLRFASTQGDDGEQVVSLAEYLARAKEGQDKIYYLTGETYAQVKNSPHLEVFRKKGIEVLLLTDRIDEWLMSYLNEFDGKSFVDVARGDLDLGNLDSEEEKKEAEEVAKSKEGLVERIKASLGDAVSEVRVSHRLTDSPAILAIGEQDLGMQMRQILEASGQKVPDSKPIFEFNPAHPLIEKLDGEQSEERFGDLSHILFDQAALAAGDSLKDPAAYVRRLNKLLVELSV.

The tract at residues 1-344 (MTMSVETQKE…SNDLSLNVSR (344 aa)) is a; substrate-binding. Residues 345-561 (EILQKDPIID…EQDLGMQMRQ (217 aa)) form a b region. The c stretch occupies residues 562-636 (ILEASGQKVP…LNKLLVELSV (75 aa)).

Belongs to the heat shock protein 90 family. Homodimer.

It is found in the cytoplasm. Molecular chaperone. Has ATPase activity. This chain is Chaperone protein HtpG, found in Pseudomonas fluorescens (strain SBW25).